Consider the following 450-residue polypeptide: Vimentin beta (450 aa).

The segment at 1-81 (MSSRTSTSSY…FGLADAINTE (81 aa)) is head. The segment covering 24-38 (STYSSRQYSSPGRTT) has biased composition (polar residues). The tract at residues 24–56 (STYSSRQYSSPGRTTSRVSYSSASSTSPSLYMS) is disordered. Residues 39–56 (SRVSYSSASSTSPSLYMS) show a composition bias toward low complexity. Positions 82 to 117 (FKANRTNEKAEMQHVNDRFASYIEEVRFLEQQNKIL) are coil 1A. Residues 89–397 (EKAEMQHVND…NLLEGEEYRI (309 aa)) form the IF rod domain. The interval 118 to 139 (TAELEQMRGKGSSRVGDLYEDE) is linker 1. Positions 140-231 (MRELRRQVDQ…KLHDEELAEL (92 aa)) are coil 1B. The segment at 232-254 (QMQIQERHVQIDMEVAKPDLTAA) is linker 12. The coil 2 stretch occupies residues 255–393 (LRDVRQQYET…ATYRNLLEGE (139 aa)). Residues 394–450 (EYRITTPFPNLSSLSLRESMKEIRPAMDSLSKKVVIKTIETRDGHIINQSTQKDNLE) form a tail region.

It belongs to the intermediate filament family. Homomer. Post-translationally, one of the most prominent phosphoproteins in various cells of mesenchymal origin. Phosphorylation is enhanced during cell division, at which time vimentin filaments are significantly reorganized. In terms of tissue distribution, expressed in low amounts in retina, optic nerve, brain, and spinal cord and in very high amounts in eye lens.

In terms of biological role, vimentins are class-III intermediate filaments found in various non-epithelial cells, especially mesenchymal cells. Vimentin is attached to the nucleus, endoplasmic reticulum, and mitochondria, either laterally or terminally. The chain is Vimentin beta from Carassius auratus (Goldfish).